The following is a 445-amino-acid chain: Proline--tRNA ligase (445 aa).

Belongs to the class-II aminoacyl-tRNA synthetase family. ProS type 2 subfamily. In terms of assembly, homodimer.

The protein resides in the cytoplasm. It carries out the reaction tRNA(Pro) + L-proline + ATP = L-prolyl-tRNA(Pro) + AMP + diphosphate. Catalyzes the attachment of proline to tRNA(Pro) in a two-step reaction: proline is first activated by ATP to form Pro-AMP and then transferred to the acceptor end of tRNA(Pro). The protein is Proline--tRNA ligase of Dinoroseobacter shibae (strain DSM 16493 / NCIMB 14021 / DFL 12).